We begin with the raw amino-acid sequence, 428 residues long: Trigger factor (428 aa).

Positions 163 to 248 (GDTVVIDFEG…LHEIKTKQLP (86 aa)) constitute a PPIase FKBP-type domain.

This sequence belongs to the FKBP-type PPIase family. Tig subfamily.

It localises to the cytoplasm. It catalyses the reaction [protein]-peptidylproline (omega=180) = [protein]-peptidylproline (omega=0). Functionally, involved in protein export. Acts as a chaperone by maintaining the newly synthesized protein in an open conformation. Functions as a peptidyl-prolyl cis-trans isomerase. This chain is Trigger factor, found in Anoxybacillus flavithermus (strain DSM 21510 / WK1).